The chain runs to 369 residues: 3-isopropylmalate dehydrogenase (369 aa).

77–90 (GPKYDVLDFSVKPE) lines the NAD(+) pocket. 4 residues coordinate substrate: Arg97, Arg107, Arg135, and Asp226. The Mg(2+) site is built by Asp226, Asp250, and Asp254. 289 to 301 (GSAPDIAGQGKAN) contacts NAD(+).

The protein belongs to the isocitrate and isopropylmalate dehydrogenases family. LeuB type 1 subfamily. In terms of assembly, homodimer. Requires Mg(2+) as cofactor. Mn(2+) serves as cofactor.

It localises to the cytoplasm. It carries out the reaction (2R,3S)-3-isopropylmalate + NAD(+) = 4-methyl-2-oxopentanoate + CO2 + NADH. The protein operates within amino-acid biosynthesis; L-leucine biosynthesis; L-leucine from 3-methyl-2-oxobutanoate: step 3/4. Functionally, catalyzes the oxidation of 3-carboxy-2-hydroxy-4-methylpentanoate (3-isopropylmalate) to 3-carboxy-4-methyl-2-oxopentanoate. The product decarboxylates to 4-methyl-2 oxopentanoate. This chain is 3-isopropylmalate dehydrogenase, found in Cereibacter sphaeroides (strain ATCC 17023 / DSM 158 / JCM 6121 / CCUG 31486 / LMG 2827 / NBRC 12203 / NCIMB 8253 / ATH 2.4.1.) (Rhodobacter sphaeroides).